An 83-amino-acid polypeptide reads, in one-letter code: Bublin coiled-coil protein (83 aa).

Residues 1-25 (MSGPNGDLGMPVDAGTEGENDSFGE) are disordered. Residues 25–74 (EAEYAAINSMLDQINSCLDHLEEKNDHLHARLQELLESNRQTRLEFQQQL) are a coiled coil. The residue at position 82 (serine 82) is a Phosphoserine.

Belongs to the UPF0184 (EST00098) family.

The protein localises to the cell junction. It is found in the cytoplasm. The protein resides in the cytoskeleton. Essential for intermediate filament organization in intestinal cells, interacts with intermediate filament and regulates intestinal lumen morphology. The sequence is that of Bublin coiled-coil protein from Mus musculus (Mouse).